Reading from the N-terminus, the 221-residue chain is Glutathione S-transferase (221 aa).

The GST N-terminal domain maps to 3–83 (GKPVLHYANT…YIAGKYNLYG (81 aa)). Glutathione contacts are provided by residues Tyr9, Lys45, 54–55 (QV), and 67–68 (QT). In terms of domain architecture, GST C-terminal spans 85 to 208 (DLKERALIDM…QPGSQRKPRL (124 aa)).

The protein belongs to the GST superfamily. Alpha family. In terms of assembly, homodimer or heterodimer of GSTA1 and GSTA2.

The catalysed reaction is RX + glutathione = an S-substituted glutathione + a halide anion + H(+). The enzyme catalyses prostaglandin A2 + glutathione = prostaglandin A2-S-(R)-glutathione. It catalyses the reaction prostaglandin J2 + glutathione = prostaglandin J2-S-(R)-glutathione. It carries out the reaction (13S)-hydroperoxy-(9Z,11E)-octadecadienoate + 2 glutathione = (13S)-hydroxy-(9Z,11E)-octadecadienoate + glutathione disulfide + H2O. The catalysed reaction is androst-5-ene-3,17-dione = androst-4-ene-3,17-dione. Glutathione S-transferase that catalyzes the nucleophilic attack of the sulfur atom of glutathione on the electrophilic groups of a wide range of exogenous and endogenous compounds. Involved in the formation of glutathione conjugates of both prostaglandin A2 (PGA2) and prostaglandin J2 (PGJ2). It also catalyzes the isomerization of D5-androstene-3,17-dione (AD) into D4-androstene-3,17-dione and may therefore play an important role in hormone biosynthesis. Through its glutathione-dependent peroxidase activity toward the fatty acid hydroperoxide (13S)-hydroperoxy-(9Z,11E)-octadecadienoate/13-HPODE it is also involved in the metabolism of oxidized linoleic acid. In Gallus gallus (Chicken), this protein is Glutathione S-transferase.